The primary structure comprises 248 residues: ATP synthase subunit a (248 aa).

6 consecutive transmembrane segments (helical) span residues 27–47 (FTNS…LMLV), 83–103 (FFPL…IGIV), 113–133 (LIVT…YGFS), 142–162 (LFVP…IEVI), 192–212 (FVAM…LPLG), and 215–235 (IALT…FAIL).

This sequence belongs to the ATPase A chain family. In terms of assembly, F-type ATPases have 2 components, CF(1) - the catalytic core - and CF(0) - the membrane proton channel. CF(1) has five subunits: alpha(3), beta(3), gamma(1), delta(1), epsilon(1). CF(0) has four main subunits: a, b, b' and c.

The protein resides in the cell inner membrane. Key component of the proton channel; it plays a direct role in the translocation of protons across the membrane. This Rhodopseudomonas palustris (strain ATCC BAA-98 / CGA009) protein is ATP synthase subunit a.